We begin with the raw amino-acid sequence, 736 residues long: MAEGNSDYDHRAMKLQRNLRHCEGKRLELERELFQHSSSDAHICHLKYMKLKNSLKEVCERGKKAHLRNQAFLQEFDLIEARLFGLISNANALQKKKMQLKSHPPEMNKGPNMSRSTYHPATIFMGRQMSASSSIEHCLTQRKSPQPTKSFSISDPHSVRQAAMNRNVTDSCVVPANSDIQCLNKPDKIDGNTSFQLSQKMPVTSVASSEDGRTHRAQIDKSQSGRKHLVESKQSAQLSTQILERLSPENRARDLQNDSPGNMVEKSLMYERLVPNEESFTHANPSGASPDACDYINNQTSDKHSARENLSETIESHLIPEEEDKQCLDSSSDLTVSISESEDDSYPPCEVNRIEVNQNDEKNLYTALPKQETVILKNYEQSSVIQPLQTSEVNSCDESSSASTISQSNLSDEGFFHLLQSIERMVLLREQGGMELYQRAGINQKQLLRLISVCNRMGALRVEDLEACCALVLCKTQELLKSTFVGYSHEATAGIHNTDESKERFLSRKCQERLLGHIAFLNKHHILNEKVLPECFTSVMMLSDGQNSCKSVENVENSTEDGNVPQVSSTMKDDPLTIKPRQIVQELYKTTGSSHQEFETQVHPGVVLQSANISVESNTQAEEENDEDEISDLSEIYIPGLTVEEGNATTKASKKQISETSFSSSEKSPISRKEDKNIQPNYMKSNNMSTGNKFSKVVTTVKSKAFWGESEDSSSEIEAMLRPKTESVDDFDDFFD.

A coiled-coil region spans residues histidine 10–glutamine 35. Residues asparagine 192–serine 208 show a composition bias toward polar residues. 4 disordered regions span residues asparagine 192 to leucine 238, serine 279 to serine 305, glutamate 323 to proline 348, and threonine 642 to threonine 690. The span at glutamate 210–isoleucine 219 shows a compositional bias: basic and acidic residues. Residues leucine 328–serine 339 are compositionally biased toward polar residues. Positions serine 658–serine 668 are enriched in low complexity. Polar residues predominate over residues isoleucine 678 to threonine 690.

The protein belongs to the kizuna family.

Its subcellular location is the cytoplasm. The protein localises to the cytoskeleton. It is found in the microtubule organizing center. It localises to the centrosome. The protein resides in the cilium basal body. In terms of biological role, centrosomal protein required for establishing a robust mitotic centrosome architecture that can endure the forces that converge on the centrosomes during spindle formation. Required for stabilizing the expanded pericentriolar material around the centriole. This Xenopus laevis (African clawed frog) protein is Centrosomal protein kizuna (kiz).